The chain runs to 380 residues: Succinyl-diaminopimelate desuccinylase (380 aa).

Residue His69 participates in Zn(2+) binding. Asp71 is an active-site residue. Residue Asp102 coordinates Zn(2+). Residue Glu135 is the Proton acceptor of the active site. Zn(2+) is bound by residues Glu136, Glu164, and His353.

The protein belongs to the peptidase M20A family. DapE subfamily. As to quaternary structure, homodimer. Zn(2+) is required as a cofactor. It depends on Co(2+) as a cofactor.

The catalysed reaction is N-succinyl-(2S,6S)-2,6-diaminopimelate + H2O = (2S,6S)-2,6-diaminopimelate + succinate. Its pathway is amino-acid biosynthesis; L-lysine biosynthesis via DAP pathway; LL-2,6-diaminopimelate from (S)-tetrahydrodipicolinate (succinylase route): step 3/3. Catalyzes the hydrolysis of N-succinyl-L,L-diaminopimelic acid (SDAP), forming succinate and LL-2,6-diaminopimelate (DAP), an intermediate involved in the bacterial biosynthesis of lysine and meso-diaminopimelic acid, an essential component of bacterial cell walls. In Phenylobacterium zucineum (strain HLK1), this protein is Succinyl-diaminopimelate desuccinylase.